Reading from the N-terminus, the 262-residue chain is Acyl-coenzyme A diphosphatase FITM2 (262 aa).

Topologically, residues 1–23 are cytoplasmic; the sequence is MEHLERCAWVLRGTLVRAAVRRY. Residues 24–44 form a helical membrane-spanning segment; sequence LPWALAASMLAGSLLKELSPL. Over 45 to 57 the chain is Lumenal; the sequence is PESYLSNKRNVLN. A helical membrane pass occupies residues 58–78; it reads VYFVKVAWAWTFCLLLPFIAL. At 79–93 the chain is on the cytoplasmic side; the sequence is TNYHLTGKAGLVLRR. The chain crosses the membrane as a helical span at residues 94-114; sequence LSTLLVGTAIWYVCTAIFSNV. Residues 115–145 are Lumenal-facing; the sequence is EHYTGSCYQSPALEGVRNEPLSKQQCHGQGG. Residues 146–166 traverse the membrane as a helical segment; the sequence is FWHGFDISGHSFLLTFCALMI. The active site involves histidine 155. Residues 167-185 are Cytoplasmic-facing; that stretch reads VEEMAVLHEVKTDRSHCLH. A helical membrane pass occupies residues 186–206; that stretch reads VAITALVVALGFLTFIWVWMF. Over 207–218 the chain is Lumenal; sequence LCTAVYFHNLSQ. Histidine 214 is an active-site residue. The helical transmembrane segment at 219-239 threads the bilayer; sequence KVFGTLFGLLGWYGTYGFWYL. Topologically, residues 240–262 are cytoplasmic; sequence KSFSPGLPPQSCSSNLKQDSYKR.

This sequence belongs to the FIT family. FIT2 subfamily.

The protein resides in the endoplasmic reticulum membrane. The catalysed reaction is an acyl-CoA + H2O = an acyl-4'-phosphopantetheine + adenosine 3',5'-bisphosphate + 2 H(+). It carries out the reaction (9Z)-octadecenoyl-CoA + H2O = S-(9Z-octadecenoyl)-4'-phosphopantetheine + adenosine 3',5'-bisphosphate + 2 H(+). It catalyses the reaction (5Z,8Z,11Z,14Z)-eicosatetraenoyl-CoA + H2O = S-(5Z,8Z,11Z,14Z-eicosatetraenoyl)-4'-phosphopantetheine + adenosine 3',5'-bisphosphate + 2 H(+). The enzyme catalyses hexadecanoyl-CoA + H2O = S-hexadecanoyl-4'-phosphopantetheine + adenosine 3',5'-bisphosphate + 2 H(+). Functionally, fatty acyl-coenzyme A (CoA) diphosphatase that hydrolyzes fatty acyl-CoA to yield acyl-4'-phosphopantetheine and adenosine 3',5'-bisphosphate. Preferentially hydrolyzes unsaturated long-chain acyl-CoA substrates such as oleoyl-CoA/(9Z)-octadecenoyl-CoA and arachidonoyl-CoA/(5Z,8Z,11Z,14Z)-eicosatetraenoyl-CoA in the endoplasmic reticulum (ER) lumen. This catalytic activity is required for maintaining ER structure and for lipid droplets (LDs) biogenesis, which are lipid storage organelles involved in maintaining lipid and energy homeostasis. Directly binds to diacylglycerol (DAGs) and triacylglycerol, which is also important for LD biogenesis. May support directional budding of nacent LDs from the ER into the cytosol by reducing DAG levels at sites of LD formation. Plays a role in the regulation of cell morphology and cytoskeletal organization. This Sus scrofa (Pig) protein is Acyl-coenzyme A diphosphatase FITM2.